The primary structure comprises 296 residues: Phosphatidylglycerol--prolipoprotein diacylglyceryl transferase (296 aa).

The next 7 membrane-spanning stretches (helical) occupy residues 17-37, 59-79, 97-117, 129-149, 203-223, 230-250, and 265-285; these read LAVR…IVVG, MMFY…VLFY, GGMS…LFAW, FVAP…FING, PSQL…LFFF, LGAV…TVEF, and LSMG…LLVW. Position 142 (R142) interacts with a 1,2-diacyl-sn-glycero-3-phospho-(1'-sn-glycerol).

It belongs to the Lgt family.

It is found in the cell inner membrane. The catalysed reaction is L-cysteinyl-[prolipoprotein] + a 1,2-diacyl-sn-glycero-3-phospho-(1'-sn-glycerol) = an S-1,2-diacyl-sn-glyceryl-L-cysteinyl-[prolipoprotein] + sn-glycerol 1-phosphate + H(+). The protein operates within protein modification; lipoprotein biosynthesis (diacylglyceryl transfer). Its function is as follows. Catalyzes the transfer of the diacylglyceryl group from phosphatidylglycerol to the sulfhydryl group of the N-terminal cysteine of a prolipoprotein, the first step in the formation of mature lipoproteins. The chain is Phosphatidylglycerol--prolipoprotein diacylglyceryl transferase from Burkholderia ambifaria (strain MC40-6).